The chain runs to 702 residues: Cadmium, zinc and cobalt-transporting ATPase (702 aa).

The Cytoplasmic portion of the chain corresponds to 1-86 (MRLVKQEYVL…HIKKSADDGY (86 aa)). Positions 4-72 (VKQEYVLDGL…KVKSIDPHVT (69 aa)) constitute an HMA domain. Residues C15 and C18 each contribute to the Cd(2+) site. C15 and C18 together coordinate Co(2+). Zn(2+)-binding residues include C15 and C18. A helical membrane pass occupies residues 87 to 107 (RNRMVNMLIRMAAAVILGAAA). Over 108 to 116 (YLVQSGTIE) the chain is Extracellular. A helical membrane pass occupies residues 117-136 (FFLFLGAYLIIGGDIIIRAV). Over 137–143 (KNIIRGQ) the chain is Cytoplasmic. The helical transmembrane segment at 144-163 (VFDEHFLMALATIGAFLIQQ) threads the bilayer. At 164 to 166 (YPE) the chain is on the extracellular side. A helical transmembrane segment spans residues 167-186 (GVAVMLFYQIGELFQGAAVS). Residues 187–320 (RSRKSISALM…ITKFAKYYTP (134 aa)) are Cytoplasmic-facing. Residues 321–339 (AVVIIAVLLAFVPPLVLSG) traverse the membrane as a helical segment. At 340–345 (AALSDW) the chain is on the extracellular side. A helical membrane pass occupies residues 346 to 363 (VYRALIFLVISCPCALVV). Residues 364 to 648 (SIPLGFFGGI…AIRIAKRTRR (285 aa)) lie on the Cytoplasmic side of the membrane. Residue D401 is the 4-aspartylphosphate intermediate of the active site. Positions 595 and 599 each coordinate Mg(2+). A helical transmembrane segment spans residues 649–670 (IVWQNIGFALGVKAIFLILGAF). Residues 671–678 (GIATMWEA) are Extracellular-facing. The chain crosses the membrane as a helical span at residues 679-694 (VFSDVGVTLLAVANAM). Over 695-702 (RVMRLKNK) the chain is Cytoplasmic.

This sequence belongs to the cation transport ATPase (P-type) (TC 3.A.3) family. Type IB subfamily.

The protein resides in the cell membrane. The catalysed reaction is Zn(2+)(in) + ATP + H2O = Zn(2+)(out) + ADP + phosphate + H(+). The enzyme catalyses Cd(2+)(in) + ATP + H2O = Cd(2+)(out) + ADP + phosphate + H(+). Its function is as follows. Couples the hydrolysis of ATP with the transport of cadmium, zinc and cobalt out of the cell. Does not seem to transport copper. The protein is Cadmium, zinc and cobalt-transporting ATPase (cadA) of Bacillus subtilis (strain 168).